The primary structure comprises 300 residues: uncharacterized protein (300 aa).

The N-terminal stretch at 1-19 is a signal peptide; the sequence is MKLKLLLIPLLGSSLLLSA. Cys20 carries the N-palmitoyl cysteine lipid modification. Cys20 carries S-diacylglycerol cysteine lipidation.

This sequence belongs to the MG439/MG440 family.

The protein localises to the cell membrane. This is an uncharacterized protein from Mycoplasma pneumoniae (strain ATCC 29342 / M129 / Subtype 1) (Mycoplasmoides pneumoniae).